Consider the following 379-residue polypeptide: Glucose-1-phosphate adenylyltransferase (379 aa).

Alpha-D-glucose 1-phosphate-binding positions include Gly-164, 179 to 180 (EK), and Ser-190.

It belongs to the bacterial/plant glucose-1-phosphate adenylyltransferase family. Homotetramer.

It catalyses the reaction alpha-D-glucose 1-phosphate + ATP + H(+) = ADP-alpha-D-glucose + diphosphate. It functions in the pathway glycan biosynthesis; glycogen biosynthesis. In terms of biological role, involved in the biosynthesis of ADP-glucose, a building block required for the elongation reactions to produce glycogen. Catalyzes the reaction between ATP and alpha-D-glucose 1-phosphate (G1P) to produce pyrophosphate and ADP-Glc. This is Glucose-1-phosphate adenylyltransferase from Streptococcus agalactiae serotype III (strain NEM316).